The sequence spans 449 residues: Bifunctional protein GlmU (449 aa).

The tract at residues 1–225 (MLSVAILAAG…NGELQGINNR (225 aa)) is pyrophosphorylase. UDP-N-acetyl-alpha-D-glucosamine is bound by residues 7–10 (LAAG), Lys21, Gln73, and 78–79 (GT). Residue Asp103 coordinates Mg(2+). UDP-N-acetyl-alpha-D-glucosamine contacts are provided by Gly140, Glu154, Asn169, and Asn223. Asn223 lines the Mg(2+) pocket. Positions 226 to 246 (IQLSKCEEIIQNSIKEKHMLN) are linker. Residues 247–449 (GVTFINQASC…NIDNWERKKP (203 aa)) form an N-acetyltransferase region. 2 residues coordinate UDP-N-acetyl-alpha-D-glucosamine: Arg328 and Lys346. Catalysis depends on His358, which acts as the Proton acceptor. Residues Tyr361 and Asn372 each coordinate UDP-N-acetyl-alpha-D-glucosamine. Residues Ala375, Ala418, and Arg435 each coordinate acetyl-CoA.

This sequence in the N-terminal section; belongs to the N-acetylglucosamine-1-phosphate uridyltransferase family. In the C-terminal section; belongs to the transferase hexapeptide repeat family. In terms of assembly, homotrimer. Mg(2+) is required as a cofactor.

Its subcellular location is the cytoplasm. The enzyme catalyses alpha-D-glucosamine 1-phosphate + acetyl-CoA = N-acetyl-alpha-D-glucosamine 1-phosphate + CoA + H(+). It catalyses the reaction N-acetyl-alpha-D-glucosamine 1-phosphate + UTP + H(+) = UDP-N-acetyl-alpha-D-glucosamine + diphosphate. Its pathway is nucleotide-sugar biosynthesis; UDP-N-acetyl-alpha-D-glucosamine biosynthesis; N-acetyl-alpha-D-glucosamine 1-phosphate from alpha-D-glucosamine 6-phosphate (route II): step 2/2. It functions in the pathway nucleotide-sugar biosynthesis; UDP-N-acetyl-alpha-D-glucosamine biosynthesis; UDP-N-acetyl-alpha-D-glucosamine from N-acetyl-alpha-D-glucosamine 1-phosphate: step 1/1. The protein operates within bacterial outer membrane biogenesis; LPS lipid A biosynthesis. Its function is as follows. Catalyzes the last two sequential reactions in the de novo biosynthetic pathway for UDP-N-acetylglucosamine (UDP-GlcNAc). The C-terminal domain catalyzes the transfer of acetyl group from acetyl coenzyme A to glucosamine-1-phosphate (GlcN-1-P) to produce N-acetylglucosamine-1-phosphate (GlcNAc-1-P), which is converted into UDP-GlcNAc by the transfer of uridine 5-monophosphate (from uridine 5-triphosphate), a reaction catalyzed by the N-terminal domain. This is Bifunctional protein GlmU from Prochlorococcus marinus (strain MIT 9312).